Here is a 426-residue protein sequence, read N- to C-terminus: C4-dicarboxylate transport protein (426 aa).

The next 8 membrane-spanning stretches (helical) occupy residues 8 to 28 (VLYV…HFYP), 44 to 64 (LIKM…IAGM), 78 to 98 (LLYF…ATHL), 148 to 168 (GEIL…AHVG), 184 to 204 (ILFG…FGAM), 222 to 242 (LIGT…GFIA), 297 to 317 (GYSF…LFIA), and 355 to 375 (AATL…ILGI).

The protein belongs to the dicarboxylate/amino acid:cation symporter (DAACS) (TC 2.A.23) family.

It localises to the cell inner membrane. Responsible for the transport of dicarboxylates such as succinate, fumarate, and malate from the periplasm across the membrane. This Paraburkholderia phymatum (strain DSM 17167 / CIP 108236 / LMG 21445 / STM815) (Burkholderia phymatum) protein is C4-dicarboxylate transport protein.